The following is a 1043-amino-acid chain: Integrator complex subunit 3 (1043 aa).

Methionine 1 is modified (N-acetylmethionine). Phosphoserine occurs at positions 502, 537, and 995. Residues 977–1043 are disordered; sequence YEDSSTKPPK…GSSAVGSDSD (67 aa). The span at 1008-1022 shows a compositional bias: acidic residues; sequence AEEESGSSSASEEED.

It belongs to the Integrator subunit 3 family. Component of the Integrator complex, composed of core subunits INTS1, INTS2, INTS3, INTS4, INTS5, INTS6, INTS7, INTS8, INTS9/RC74, INTS10, INTS11/CPSF3L, INTS12, INTS13, INTS14 and INTS15. The core complex associates with protein phosphatase 2A subunits PPP2CA and PPP2R1A, to form the Integrator-PP2A (INTAC) complex. Component of the SOSS complex, composed of SOSS-B (SOSS-B1/NABP2 or SOSS-B2/NABP1), SOSS-A/INTS3 and SOSS-C/INIP. SOSS complexes containing SOSS-B1/NABP2 are more abundant than complexes containing SOSS-B2/NABP1. Interacts with SOSS-B1/NABP2, SOSS-B2/NABP1 and SOSS-C/INIP; the interaction is direct. Interacts with NBN/NBS1.

Its subcellular location is the nucleus. It is found in the cytoplasm. In terms of biological role, component of the integrator complex, a multiprotein complex that terminates RNA polymerase II (Pol II) transcription in the promoter-proximal region of genes. The integrator complex provides a quality checkpoint during transcription elongation by driving premature transcription termination of transcripts that are unfavorably configured for transcriptional elongation: the complex terminates transcription by (1) catalyzing dephosphorylation of the C-terminal domain (CTD) of Pol II subunit POLR2A/RPB1 and SUPT5H/SPT5, (2) degrading the exiting nascent RNA transcript via endonuclease activity and (3) promoting the release of Pol II from bound DNA. The integrator complex is also involved in terminating the synthesis of non-coding Pol II transcripts, such as enhancer RNAs (eRNAs), small nuclear RNAs (snRNAs), telomerase RNAs and long non-coding RNAs (lncRNAs). Within the integrator complex, INTS3 is involved in the post-termination step: INTS3 binds INTS7 in the open conformation of integrator complex and prevents the rebinding of Pol II to the integrator after termination cycle. Mediates recruitment of cytoplasmic dynein to the nuclear envelope, probably as component of the integrator complex. Its function is as follows. Component of the SOSS complex, a multiprotein complex that functions downstream of the MRN complex to promote DNA repair and G2/M checkpoint. The SOSS complex associates with single-stranded DNA at DNA lesions and influences diverse endpoints in the cellular DNA damage response including cell-cycle checkpoint activation, recombinational repair and maintenance of genomic stability. The SOSS complex is required for efficient homologous recombination-dependent repair of double-strand breaks (DSBs) and ATM-dependent signaling pathways. In the SOSS complex, it is required for the assembly of the complex and for stabilization of the complex at DNA damage sites. The sequence is that of Integrator complex subunit 3 from Homo sapiens (Human).